Reading from the N-terminus, the 349-residue chain is DNA polymerase IV (349 aa).

The region spanning 7–188 (IIHIDMDYFF…LPVKKLFGVG (182 aa)) is the UmuC domain. Residues D11 and D106 each contribute to the Mg(2+) site. Residue E107 is part of the active site.

It belongs to the DNA polymerase type-Y family. As to quaternary structure, monomer. Mg(2+) is required as a cofactor.

The protein localises to the cytoplasm. The enzyme catalyses DNA(n) + a 2'-deoxyribonucleoside 5'-triphosphate = DNA(n+1) + diphosphate. Poorly processive, error-prone DNA polymerase involved in untargeted mutagenesis. Copies undamaged DNA at stalled replication forks, which arise in vivo from mismatched or misaligned primer ends. These misaligned primers can be extended by PolIV. Exhibits no 3'-5' exonuclease (proofreading) activity. May be involved in translesional synthesis, in conjunction with the beta clamp from PolIII. The protein is DNA polymerase IV of Francisella tularensis subsp. holarctica (strain OSU18).